Here is a 946-residue protein sequence, read N- to C-terminus: DNA primase (946 aa).

The tract at residues 596–626 (RDTEEDEDGKEDKNNVPDNGVFQKTTSSVDT) is disordered. A compositionally biased stretch (polar residues) spans 617–626 (FQKTTSSVDT). Residues 881–920 (CLNYTHRNPQETVQVFIDLRTEHSYALWASLWSRCFTKKC) form a CHC2-type zinc finger.

The protein belongs to the herpesviridae DNA primase family. Associates with the helicase and the primase-associated factor to form the helicase-primase factor.

Its subcellular location is the host nucleus. Essential component of the helicase/primase complex. Unwinds the DNA at the replication forks and generates single-stranded DNA for both leading and lagging strand synthesis. The primase initiates primer synthesis and thereby produces large amount of short RNA primers on the lagging strand that the polymerase elongates using dNTPs. In Human cytomegalovirus (strain AD169) (HHV-5), this protein is DNA primase (UL70).